The sequence spans 110 residues: MKRSHKDYLEDIAEAIELIEEFTREICFEDFLCDKKTQFAVIRALEIIGEASKNIPNDFKRLHPEIPWREMARMRDKLIHAYFGVDVRVLWKTVKEDIPSLKGKFEKLRK.

Catalysis depends on residues Arg-75 and His-80. The short motif at 75–82 (RDKLIHAY) is the RX(4)HXY motif element. Position 82 is an O-di-AMP-tyrosine (Tyr-82).

This sequence belongs to the HepT RNase toxin family. Post-translationally, modified by cognate antitoxin MntA; probably at least 2 successive AMPylation events occur on Tyr-82.

Toxic component of a type VII toxin-antitoxin (TA) system. Overexpression in E.coli inhibits cell growth. Neutralized by cognate antitoxin MntA. Neutralization is probably due to AMPylation by MntA. Probably an RNAase. The protein is Probable ribonuclease HepT of Thermococcus cleftensis (strain DSM 27260 / KACC 17922 / CL1).